The chain runs to 390 residues: Chorismate synthase 1 (390 aa).

Residues R39 and R45 each coordinate NADP(+). The tract at residues 95-117 is disordered; it reads EQEEKEMKRKVTKPRPGHADLNG. FMN-binding positions include 132 to 134, 253 to 254, G298, 313 to 317, and R339; these read RSS, NA, and KPIPT.

It belongs to the chorismate synthase family. As to quaternary structure, homotetramer. The cofactor is FMNH2.

It carries out the reaction 5-O-(1-carboxyvinyl)-3-phosphoshikimate = chorismate + phosphate. The protein operates within metabolic intermediate biosynthesis; chorismate biosynthesis; chorismate from D-erythrose 4-phosphate and phosphoenolpyruvate: step 7/7. Its function is as follows. Catalyzes the anti-1,4-elimination of the C-3 phosphate and the C-6 proR hydrogen from 5-enolpyruvylshikimate-3-phosphate (EPSP) to yield chorismate, which is the branch point compound that serves as the starting substrate for the three terminal pathways of aromatic amino acid biosynthesis. This reaction introduces a second double bond into the aromatic ring system. In Bacillus cereus (strain ATCC 10987 / NRS 248), this protein is Chorismate synthase 1.